The following is a 668-amino-acid chain: tRNA 5-methylaminomethyl-2-thiouridine biosynthesis bifunctional protein MnmC (668 aa).

Positions Met-1–Glu-245 are tRNA (mnm(5)s(2)U34)-methyltransferase. Residues Ile-270 to Gly-668 are FAD-dependent cmnm(5)s(2)U34 oxidoreductase.

This sequence in the N-terminal section; belongs to the methyltransferase superfamily. tRNA (mnm(5)s(2)U34)-methyltransferase family. It in the C-terminal section; belongs to the DAO family. FAD is required as a cofactor.

It is found in the cytoplasm. The enzyme catalyses 5-aminomethyl-2-thiouridine(34) in tRNA + S-adenosyl-L-methionine = 5-methylaminomethyl-2-thiouridine(34) in tRNA + S-adenosyl-L-homocysteine + H(+). In terms of biological role, catalyzes the last two steps in the biosynthesis of 5-methylaminomethyl-2-thiouridine (mnm(5)s(2)U) at the wobble position (U34) in tRNA. Catalyzes the FAD-dependent demodification of cmnm(5)s(2)U34 to nm(5)s(2)U34, followed by the transfer of a methyl group from S-adenosyl-L-methionine to nm(5)s(2)U34, to form mnm(5)s(2)U34. In Shigella flexneri serotype 5b (strain 8401), this protein is tRNA 5-methylaminomethyl-2-thiouridine biosynthesis bifunctional protein MnmC.